The sequence spans 331 residues: 4-hydroxy-3-methylbut-2-enyl diphosphate reductase (331 aa).

Cys-12 is a [4Fe-4S] cluster binding site. 2 residues coordinate (2E)-4-hydroxy-3-methylbut-2-enyl diphosphate: His-43 and His-81. His-43 and His-81 together coordinate dimethylallyl diphosphate. The isopentenyl diphosphate site is built by His-43 and His-81. Residue Cys-103 coordinates [4Fe-4S] cluster. His-131 contacts (2E)-4-hydroxy-3-methylbut-2-enyl diphosphate. Residue His-131 participates in dimethylallyl diphosphate binding. His-131 lines the isopentenyl diphosphate pocket. The Proton donor role is filled by Glu-133. Thr-170 lines the (2E)-4-hydroxy-3-methylbut-2-enyl diphosphate pocket. Cys-198 is a [4Fe-4S] cluster binding site. The (2E)-4-hydroxy-3-methylbut-2-enyl diphosphate site is built by Ser-226, Asn-228, and Ser-271. Dimethylallyl diphosphate is bound by residues Ser-226, Asn-228, and Ser-271. Residues Ser-226, Asn-228, and Ser-271 each contribute to the isopentenyl diphosphate site.

This sequence belongs to the IspH family. [4Fe-4S] cluster is required as a cofactor.

The catalysed reaction is isopentenyl diphosphate + 2 oxidized [2Fe-2S]-[ferredoxin] + H2O = (2E)-4-hydroxy-3-methylbut-2-enyl diphosphate + 2 reduced [2Fe-2S]-[ferredoxin] + 2 H(+). It carries out the reaction dimethylallyl diphosphate + 2 oxidized [2Fe-2S]-[ferredoxin] + H2O = (2E)-4-hydroxy-3-methylbut-2-enyl diphosphate + 2 reduced [2Fe-2S]-[ferredoxin] + 2 H(+). It participates in isoprenoid biosynthesis; dimethylallyl diphosphate biosynthesis; dimethylallyl diphosphate from (2E)-4-hydroxy-3-methylbutenyl diphosphate: step 1/1. It functions in the pathway isoprenoid biosynthesis; isopentenyl diphosphate biosynthesis via DXP pathway; isopentenyl diphosphate from 1-deoxy-D-xylulose 5-phosphate: step 6/6. Functionally, catalyzes the conversion of 1-hydroxy-2-methyl-2-(E)-butenyl 4-diphosphate (HMBPP) into a mixture of isopentenyl diphosphate (IPP) and dimethylallyl diphosphate (DMAPP). Acts in the terminal step of the DOXP/MEP pathway for isoprenoid precursor biosynthesis. This is 4-hydroxy-3-methylbut-2-enyl diphosphate reductase from Listeria monocytogenes serotype 4b (strain CLIP80459).